We begin with the raw amino-acid sequence, 182 residues long: Peptidyl-prolyl cis-trans isomerase C, mitochondrial (182 aa).

A mitochondrion-targeting transit peptide spans 1–20; that stretch reads MFKRSIIQQSRLFSNSASRL. One can recognise a PPIase cyclophilin-type domain in the interval 25-181; it reads FFDPAVNGTK…AEIVIEEAGE (157 aa).

This sequence belongs to the cyclophilin-type PPIase family.

The protein resides in the mitochondrion matrix. It catalyses the reaction [protein]-peptidylproline (omega=180) = [protein]-peptidylproline (omega=0). Its activity is regulated as follows. Inhibited by the immunosuppressant drug cyclosporin A and by SDZ NIM811, a PPIase inhibitor. In terms of biological role, PPIases accelerate the folding of proteins. It catalyzes the cis-trans isomerization of proline imidic peptide bonds in oligopeptides. This isozyme is required for growth on lactate at high temperature. The sequence is that of Peptidyl-prolyl cis-trans isomerase C, mitochondrial (CPR3) from Saccharomyces cerevisiae (strain ATCC 204508 / S288c) (Baker's yeast).